Here is a 45-residue protein sequence, read N- to C-terminus: Iota-conotoxin-like R11.13 (45 aa).

Intrachain disulfides connect C5–C19, C12–C22, C18–C27, and C21–C36. L43 carries the post-translational modification D-leucine. R45 is a propeptide (removed by a carboxypeptidase).

It belongs to the conotoxin I1 superfamily. As to expression, expressed by the venom duct.

It is found in the secreted. In terms of biological role, iota-conotoxins bind to voltage-gated sodium channels (Nav) and act as agonists by shifting the voltage-dependence of activation to more hyperpolarized levels. Produces general excitatory symptoms. In Conus radiatus (Rayed cone), this protein is Iota-conotoxin-like R11.13.